A 346-amino-acid polypeptide reads, in one-letter code: Structure-specific endonuclease subunit SLX1 (346 aa).

The GIY-YIG domain occupies 10–92 (ALYCVYILRS…TNPHTSLHIP (83 aa)). The segment at 238 to 296 (CVVCKEEIDPEEGGLHAVCSNEGCEGVGHLRCWGRYLLKSEEGGGEGAILPVGGRCPRC) adopts an SLX1-type zinc-finger fold. The span at 324 to 336 (KVKRKRAPRKKTA) shows a compositional bias: basic residues. A disordered region spans residues 324 to 346 (KVKRKRAPRKKTAKTKETREEDG). Positions 337 to 346 (KTKETREEDG) are enriched in basic and acidic residues.

It belongs to the SLX1 family. In terms of assembly, forms a heterodimer with SLX4. Requires a divalent metal cation as cofactor.

The protein localises to the nucleus. Catalytic subunit of the SLX1-SLX4 structure-specific endonuclease that resolves DNA secondary structures generated during DNA repair and recombination. Has endonuclease activity towards branched DNA substrates, introducing single-strand cuts in duplex DNA close to junctions with ss-DNA. The chain is Structure-specific endonuclease subunit SLX1 from Podospora anserina (strain S / ATCC MYA-4624 / DSM 980 / FGSC 10383) (Pleurage anserina).